The sequence spans 777 residues: Endonuclease MutS2 (777 aa).

328–335 (GPNTGGKT) contributes to the ATP binding site. The Smr domain occupies 702-777 (LDLRGKRYEE…GSGATIVIFK (76 aa)).

The protein belongs to the DNA mismatch repair MutS family. MutS2 subfamily. As to quaternary structure, homodimer. Binds to stalled ribosomes, contacting rRNA.

Endonuclease that is involved in the suppression of homologous recombination and thus may have a key role in the control of bacterial genetic diversity. In terms of biological role, acts as a ribosome collision sensor, splitting the ribosome into its 2 subunits. Detects stalled/collided 70S ribosomes which it binds and splits by an ATP-hydrolysis driven conformational change. Acts upstream of the ribosome quality control system (RQC), a ribosome-associated complex that mediates the extraction of incompletely synthesized nascent chains from stalled ribosomes and their subsequent degradation. Probably generates substrates for RQC. This is Endonuclease MutS2 from Streptococcus gordonii (strain Challis / ATCC 35105 / BCRC 15272 / CH1 / DL1 / V288).